A 194-amino-acid chain; its full sequence is Crossover junction endodeoxyribonuclease RuvC (194 aa).

Catalysis depends on residues Asp-7, Glu-68, and Asp-141. Asp-7, Glu-68, and Asp-141 together coordinate Mg(2+). The tract at residues 162–194 (GGEREQHLTAAQRQWAEAAQNSTRRRKNSDRGM) is disordered. Residues 184–194 (TRRRKNSDRGM) show a composition bias toward basic residues.

The protein belongs to the RuvC family. As to quaternary structure, homodimer which binds Holliday junction (HJ) DNA. The HJ becomes 2-fold symmetrical on binding to RuvC with unstacked arms; it has a different conformation from HJ DNA in complex with RuvA. In the full resolvosome a probable DNA-RuvA(4)-RuvB(12)-RuvC(2) complex forms which resolves the HJ. Mg(2+) serves as cofactor.

Its subcellular location is the cytoplasm. The catalysed reaction is Endonucleolytic cleavage at a junction such as a reciprocal single-stranded crossover between two homologous DNA duplexes (Holliday junction).. Functionally, the RuvA-RuvB-RuvC complex processes Holliday junction (HJ) DNA during genetic recombination and DNA repair. Endonuclease that resolves HJ intermediates. Cleaves cruciform DNA by making single-stranded nicks across the HJ at symmetrical positions within the homologous arms, yielding a 5'-phosphate and a 3'-hydroxyl group; requires a central core of homology in the junction. The consensus cleavage sequence is 5'-(A/T)TT(C/G)-3'. Cleavage occurs on the 3'-side of the TT dinucleotide at the point of strand exchange. HJ branch migration catalyzed by RuvA-RuvB allows RuvC to scan DNA until it finds its consensus sequence, where it cleaves and resolves the cruciform DNA. This chain is Crossover junction endodeoxyribonuclease RuvC, found in Bifidobacterium longum subsp. infantis (strain ATCC 15697 / DSM 20088 / JCM 1222 / NCTC 11817 / S12).